The following is a 137-amino-acid chain: Putative pre-16S rRNA nuclease (137 aa).

It belongs to the YqgF nuclease family.

It localises to the cytoplasm. In terms of biological role, could be a nuclease involved in processing of the 5'-end of pre-16S rRNA. The chain is Putative pre-16S rRNA nuclease from Actinobacillus pleuropneumoniae serotype 7 (strain AP76).